The chain runs to 465 residues: Chromosomal replication initiator protein DnaA (465 aa).

A domain I, interacts with DnaA modulators region spans residues 1–72 (MRTKQLWQVA…ETLSLLLGRP (72 aa)). Residues 72–117 (PIAVHFTVHGQDDEEHPVQRRPQRRALASEEGSASKQLSLTPSPEH) are domain II. A disordered region spans residues 80-118 (HGQDDEEHPVQRRPQRRALASEEGSASKQLSLTPSPEHG). The segment covering 103 to 113 (GSASKQLSLTP) has biased composition (polar residues). The interval 118–334 (GLNPRYTFEK…GALNRIVALA (217 aa)) is domain III, AAA+ region. ATP is bound by residues glycine 162, glycine 164, lysine 165, and threonine 166. The domain IV, binds dsDNA stretch occupies residues 335–465 (QLTHQPITLA…DAKAPLASRH (131 aa)).

This sequence belongs to the DnaA family. Oligomerizes as a right-handed, spiral filament on DNA at oriC.

It localises to the cytoplasm. In terms of biological role, plays an essential role in the initiation and regulation of chromosomal replication. ATP-DnaA binds to the origin of replication (oriC) to initiate formation of the DNA replication initiation complex once per cell cycle. Binds the DnaA box (a 9 base pair repeat at the origin) and separates the double-stranded (ds)DNA. Forms a right-handed helical filament on oriC DNA; dsDNA binds to the exterior of the filament while single-stranded (ss)DNA is stabiized in the filament's interior. The ATP-DnaA-oriC complex binds and stabilizes one strand of the AT-rich DNA unwinding element (DUE), permitting loading of DNA polymerase. After initiation quickly degrades to an ADP-DnaA complex that is not apt for DNA replication. Binds acidic phospholipids. In Thermomicrobium roseum (strain ATCC 27502 / DSM 5159 / P-2), this protein is Chromosomal replication initiator protein DnaA.